A 149-amino-acid chain; its full sequence is 6,7-dimethyl-8-ribityllumazine synthase (149 aa).

Residues phenylalanine 22, alanine 56–glutamate 58, and alanine 80–isoleucine 82 each bind 5-amino-6-(D-ribitylamino)uracil. A (2S)-2-hydroxy-3-oxobutyl phosphate-binding site is contributed by glutamate 85–threonine 86. The Proton donor role is filled by histidine 88. Position 113 (asparagine 113) interacts with 5-amino-6-(D-ribitylamino)uracil. Arginine 127 lines the (2S)-2-hydroxy-3-oxobutyl phosphate pocket.

This sequence belongs to the DMRL synthase family.

The catalysed reaction is (2S)-2-hydroxy-3-oxobutyl phosphate + 5-amino-6-(D-ribitylamino)uracil = 6,7-dimethyl-8-(1-D-ribityl)lumazine + phosphate + 2 H2O + H(+). It participates in cofactor biosynthesis; riboflavin biosynthesis; riboflavin from 2-hydroxy-3-oxobutyl phosphate and 5-amino-6-(D-ribitylamino)uracil: step 1/2. In terms of biological role, catalyzes the formation of 6,7-dimethyl-8-ribityllumazine by condensation of 5-amino-6-(D-ribitylamino)uracil with 3,4-dihydroxy-2-butanone 4-phosphate. This is the penultimate step in the biosynthesis of riboflavin. The sequence is that of 6,7-dimethyl-8-ribityllumazine synthase from Methylobacillus flagellatus (strain ATCC 51484 / DSM 6875 / VKM B-1610 / KT).